Reading from the N-terminus, the 388-residue chain is Chaperone protein DnaJ (388 aa).

In terms of domain architecture, J spans 5–70; the sequence is DYYTTLNISN…KKRNLYDQYG (66 aa). A CR-type zinc finger spans residues 135–213; that stretch reads GIKKEIRIPK…CFGQGRIKKS (79 aa). Zn(2+)-binding residues include Cys148, Cys151, Cys165, Cys168, Cys187, Cys190, Cys201, and Cys204. CXXCXGXG motif repeat units lie at residues 148-155, 165-172, 187-194, and 201-208; these read CQSCYGYG, CTSCNGHG, CSTCRGTG, and CKICFGQG.

Belongs to the DnaJ family. In terms of assembly, homodimer. The cofactor is Zn(2+).

It is found in the cytoplasm. Its function is as follows. Participates actively in the response to hyperosmotic and heat shock by preventing the aggregation of stress-denatured proteins and by disaggregating proteins, also in an autonomous, DnaK-independent fashion. Unfolded proteins bind initially to DnaJ; upon interaction with the DnaJ-bound protein, DnaK hydrolyzes its bound ATP, resulting in the formation of a stable complex. GrpE releases ADP from DnaK; ATP binding to DnaK triggers the release of the substrate protein, thus completing the reaction cycle. Several rounds of ATP-dependent interactions between DnaJ, DnaK and GrpE are required for fully efficient folding. Also involved, together with DnaK and GrpE, in the DNA replication of plasmids through activation of initiation proteins. The sequence is that of Chaperone protein DnaJ from Buchnera aphidicola subsp. Cinara cedri (strain Cc).